A 249-amino-acid chain; its full sequence is Triosephosphate isomerase (249 aa).

Asn-10 and Lys-12 together coordinate substrate. His-94 functions as the Electrophile in the catalytic mechanism. Residue Glu-166 is the Proton acceptor of the active site.

Belongs to the triosephosphate isomerase family. Homodimer.

It carries out the reaction D-glyceraldehyde 3-phosphate = dihydroxyacetone phosphate. It functions in the pathway carbohydrate biosynthesis; gluconeogenesis. Its pathway is carbohydrate degradation; glycolysis; D-glyceraldehyde 3-phosphate from glycerone phosphate: step 1/1. The sequence is that of Triosephosphate isomerase (tpiA) from Emericella nidulans (strain FGSC A4 / ATCC 38163 / CBS 112.46 / NRRL 194 / M139) (Aspergillus nidulans).